The primary structure comprises 240 residues: Ubiquinone biosynthesis O-methyltransferase (240 aa).

Positions 44, 64, 85, and 129 each coordinate S-adenosyl-L-methionine.

It belongs to the methyltransferase superfamily. UbiG/COQ3 family.

It carries out the reaction a 3-demethylubiquinol + S-adenosyl-L-methionine = a ubiquinol + S-adenosyl-L-homocysteine + H(+). The enzyme catalyses a 3-(all-trans-polyprenyl)benzene-1,2-diol + S-adenosyl-L-methionine = a 2-methoxy-6-(all-trans-polyprenyl)phenol + S-adenosyl-L-homocysteine + H(+). Its pathway is cofactor biosynthesis; ubiquinone biosynthesis. Its function is as follows. O-methyltransferase that catalyzes the 2 O-methylation steps in the ubiquinone biosynthetic pathway. The chain is Ubiquinone biosynthesis O-methyltransferase from Escherichia coli (strain UTI89 / UPEC).